The following is a 229-amino-acid chain: Putative N-acetylmannosamine-6-phosphate 2-epimerase (229 aa).

The protein belongs to the NanE family.

It catalyses the reaction an N-acyl-D-glucosamine 6-phosphate = an N-acyl-D-mannosamine 6-phosphate. The protein operates within amino-sugar metabolism; N-acetylneuraminate degradation; D-fructose 6-phosphate from N-acetylneuraminate: step 3/5. Converts N-acetylmannosamine-6-phosphate (ManNAc-6-P) to N-acetylglucosamine-6-phosphate (GlcNAc-6-P). This is Putative N-acetylmannosamine-6-phosphate 2-epimerase from Escherichia coli O139:H28 (strain E24377A / ETEC).